A 1113-amino-acid polypeptide reads, in one-letter code: Nucleoporin NUP116/NSP116 (1113 aa).

The segment at methionine 1–alanine 35 is disordered. FG repeat units follow at residues phenylalanine 2 to glycine 3, phenylalanine 17 to glycine 18, phenylalanine 24 to glycine 25, and phenylalanine 40 to glycine 41. The segment covering threonine 13–proline 33 has biased composition (low complexity). The interval threonine 49–glycine 91 is disordered. One copy of the GLFG 1; approximate repeat lies at glycine 55–glycine 58. FG repeat units lie at residues phenylalanine 66–glycine 67, phenylalanine 79–glycine 80, and phenylalanine 94–glycine 95. The segment at serine 92–asparagine 172 is interaction with AFG2. The segment at valine 110–lysine 166 is GLE2 binding sequence (GLEBS). Residues aspartate 160 to glycine 362 form an interaction with MEX67, not KAP95 region. FG repeat units follow at residues phenylalanine 167–glycine 168 and phenylalanine 189–glycine 190. One copy of the GLFG 2 repeat lies at glycine 205–glycine 208. One copy of the GLFG 3; approximate repeat lies at glycine 214–glycine 217. A GLFG 4; approximate repeat occupies glycine 224–glycine 227. The GLFG 5 repeat unit spans residues glycine 235–glycine 238. The stretch at phenylalanine 249 to glycine 250 is one FG 10 repeat. 3 GLFG repeats span residues glycine 259–glycine 262, glycine 276–glycine 279, and glycine 288–glycine 291. The segment covering threonine 265–glycine 279 has biased composition (low complexity). A disordered region spans residues threonine 265 to phenylalanine 341. Residues glutamine 280–asparagine 304 are compositionally biased toward polar residues. Residues phenylalanine 297 to glycine 298 form an FG 11 repeat. A GLFG 9; approximate repeat occupies glycine 306 to glycine 309. Residues glycine 327 to glycine 330 form a GLFG 10; approximate repeat. The segment covering glycine 330–phenylalanine 341 has biased composition (low complexity). Residues glycine 339 to glycine 342 form a GLFG 11; approximate repeat. One copy of the FG 12 repeat lies at phenylalanine 351–glycine 352. The stretch at glycine 359 to glycine 362 is one GLFG 12 repeat. The segment at glycine 362 to threonine 535 is sufficient for interaction with MEX67 and KAP95. An FG 13 repeat occupies phenylalanine 370 to glycine 371. The segment at glycine 371–phenylalanine 606 is disordered. 4 GLFG repeats span residues glycine 382 to glycine 385, glycine 395 to glycine 398, glycine 407 to glycine 410, and glycine 420 to glycine 423. The span at glycine 410 to glycine 438 shows a compositional bias: low complexity. The stretch at phenylalanine 431–glycine 432 is one FG 14 repeat. GLFG repeat units follow at residues glycine 439–glycine 442 and glycine 448–glycine 451. Residues glycine 451–alanine 464 show a composition bias toward polar residues. 2 stretches are compositionally biased toward low complexity: residues glutamine 465–glutamine 478 and glycine 485–asparagine 522. The stretch at phenylalanine 470–glycine 471 is one FG 15 repeat. GLFG repeat units lie at residues glycine 482–glycine 485 and glycine 497–glycine 500. FG repeat units follow at residues phenylalanine 510 to glycine 511, phenylalanine 525 to glycine 526, and phenylalanine 532 to glycine 533. A compositionally biased stretch (polar residues) spans phenylalanine 532 to alanine 569. The segment at serine 536–glutamine 732 is interaction with KAP95, not MEX67. 3 GLFG repeats span residues glycine 572–glycine 575, glycine 585–glycine 588, and glycine 604–glycine 607. The segment covering glycine 588–glycine 603 has biased composition (polar residues). Residues phenylalanine 616–glycine 617 form an FG 19 repeat. A GLFG 24; approximate repeat occupies glycine 630–glycine 633. GLFG repeat units follow at residues glycine 648–glycine 651, glycine 665–glycine 668, and glycine 683–glycine 686. Positions serine 678–serine 691 are enriched in low complexity. Disordered regions lie at residues serine 678–arginine 736 and serine 868–alanine 939. The segment covering glutamine 692–threonine 708 has biased composition (polar residues). The segment covering glutamine 719 to arginine 736 has biased composition (low complexity). Phosphoserine is present on serine 886. The segment covering asparagine 916 to alanine 939 has biased composition (basic and acidic residues). Positions asparagine 967–alanine 1109 constitute a Peptidase S59 domain. The interaction with NUP82 NPC subcomplex stretch occupies residues asparagine 967 to threonine 1113. The segment at asparagine 969–histidine 1108 is nucleoporin RNA-binding motif (NRM).

It belongs to the nucleoporin GLFG family. As to quaternary structure, component of the nuclear pore complex (NPC). NPC constitutes the exclusive means of nucleocytoplasmic transport. NPCs allow the passive diffusion of ions and small molecules and the active, nuclear transport receptor-mediated bidirectional transport of macromolecules such as proteins, RNAs, ribonucleoparticles (RNPs), and ribosomal subunits across the nuclear envelope. Due to its 8-fold rotational symmetry, all subunits are present with 8 copies or multiples thereof. NUP116 interacts with the NUP82 subcomplex and GLE2. Through its FG repeats it interacts with numerous karyopherins including KAP95, PSE1 (GSP1-GDP dependent), MEX67, and to homomeric RNA. Interacts with CEX1. Interacts (via N-terminus) with AFG2 (via N-terminus).

Its subcellular location is the nucleus. It is found in the nuclear pore complex. The protein localises to the nucleus membrane. Functionally, functions as a component of the nuclear pore complex (NPC). NPC components, collectively referred to as nucleoporins (NUPs), can play the role of both NPC structural components and of docking or interaction partners for transiently associated nuclear transport factors. Active directional transport is assured by both, a Phe-Gly (FG) repeat affinity gradient for these transport factors across the NPC and a transport cofactor concentration gradient across the nuclear envelope (GSP1 and GSP2 GTPases associated predominantly with GTP in the nucleus, with GDP in the cytoplasm). Plays an important role in several nuclear export and import pathways including poly(A)+ RNA, tRNA, pre-ribosome, and protein transport. By binding ATPase AFG2, promotes AFG2-mediated release of shuttling protein RLP24 from pre-60S ribosomal particles. This chain is Nucleoporin NUP116/NSP116 (NUP116), found in Saccharomyces cerevisiae (strain ATCC 204508 / S288c) (Baker's yeast).